The sequence spans 380 residues: Putative F-box/kelch-repeat protein At2g44030 (380 aa).

An F-box domain is found at 16 to 66 (PKSFLSLPYDVVFNCLSRVSRTHDPILSLVSKSFRSLLALPDLEAERFRIL). 2 Kelch repeats span residues 123-170 (EIYL…VIDG) and 172-219 (INVY…ALIK).

The sequence is that of Putative F-box/kelch-repeat protein At2g44030 from Arabidopsis thaliana (Mouse-ear cress).